Reading from the N-terminus, the 221-residue chain is Probable septum site-determining protein MinC (221 aa).

It belongs to the MinC family. In terms of assembly, interacts with MinD and FtsZ.

In terms of biological role, cell division inhibitor that blocks the formation of polar Z ring septums. Rapidly oscillates between the poles of the cell to destabilize FtsZ filaments that have formed before they mature into polar Z rings. Prevents FtsZ polymerization. This is Probable septum site-determining protein MinC from Shewanella halifaxensis (strain HAW-EB4).